The primary structure comprises 201 residues: Protein CIMAP1C (201 aa).

One copy of the STPGR repeat lies at 171 to 186; it reads PAPTMSSRSGHTSPAR. A disordered region spans residues 172 to 201; the sequence is APTMSSRSGHTSPARLLSPWASSTRPTYAR. A compositionally biased stretch (polar residues) spans 191–201; the sequence is WASSTRPTYAR.

This sequence belongs to the CIMAP family.

In Bos taurus (Bovine), this protein is Protein CIMAP1C (CIMAP1C).